Consider the following 952-residue polypeptide: Bromodomain testis-specific protein (952 aa).

In terms of domain architecture, Bromo 1 spans 26–132; that stretch reads RLTNQLQFLQ…KLFMQKLSQM (107 aa). Over residues 141–150 the composition is skewed to basic and acidic residues; the sequence is GKERMKKDIQ. A disordered region spans residues 141 to 168; it reads GKERMKKDIQQKTAVSSAKEQTPSKSAE. The segment covering 151–167 has biased composition (polar residues); sequence QKTAVSSAKEQTPSKSA. Ser186 carries the phosphoserine modification. The Nuclear localization signal signature appears at 208-219; that stretch reads KGVKRRADTTTP. The segment at 209-257 is disordered; that stretch reads GVKRRADTTTPTTSSAKASSESPPPLREAKPANAPVKENTVKSVLPDSQ. A compositionally biased stretch (low complexity) spans 216 to 229; it reads TTTPTTSSAKASSE. The region spanning 266–375 is the Bromo 2 domain; sequence VKVTEQLKHC…DVFEMHFAKI (110 aa). 4 disordered regions span residues 392–420, 442–504, 607–746, and 850–930; these read SAKALSRESSSEASSGDCSSEDSEDERVQ, VPLR…NAKP, QLNC…GCQV, and KHLE…RREA. A coiled-coil region spans residues 417–442; the sequence is ERVQRLAKLQEQLNAVHQQLQVLSQV. Over residues 445 to 463 the composition is skewed to basic residues; it reads RKLKKKNEKSKRAPKRKKV. Residues 495–577 enclose the NET domain; sequence KLEEEDNAKP…ACLRKRSLKP (83 aa). A compositionally biased stretch (basic residues) spans 610 to 619; sequence CRKRQTKRPA. Pro residues predominate over residues 625–638; it reads PRPPLPPPPPPPPE. Low complexity predominate over residues 646-681; it reads SDSSSSSSSSGSGSSSSSSSSSGSGSSSSDSSSSDS. Polar residues predominate over residues 718-729; it reads SAETALVQQSTG. The stretch at 837-936 forms a coiled coil; the sequence is EKEVKARTQE…RREAMAGTID (100 aa). Positions 850–867 are enriched in basic and acidic residues; the sequence is KHLEHSAKDPKVSQESQR. The span at 874 to 883 shows a compositional bias: polar residues; that stretch reads TPESSSNKVQ. The segment covering 893–902 has biased composition (low complexity); the sequence is EQQQLPSPSE. Residues 911–930 show a composition bias toward basic and acidic residues; it reads LLKDRNLAREKEQERRRREA.

The protein belongs to the BET family. Interacts with the acetylated N-terminus of histone H1, H2, H3 and H4. Interacts with P-TEFb components CDK9 and CCNT1/cyclin-T1. Interacts with mRNA splicing machinery proteins SRSF2, DDX5, HNRNPK and TARDBP. Interacts with SMARCE1. In terms of processing, ubiquitinated in a SPOP-dependent manner, leading to proteasomal degradation.

It is found in the nucleus. In terms of biological role, testis-specific chromatin protein that specifically binds histone H4 acetylated at 'Lys-5' and 'Lys-8' (H4K5ac and H4K8ac, respectively) and plays a key role in spermatogenesis. Required in late pachytene spermatocytes: plays a role in meiotic and post-meiotic cells by binding to acetylated histones at the promoter of specific meiotic and post-meiotic genes, facilitating their activation at the appropriate time. In the post-meiotic phase of spermatogenesis, binds to hyperacetylated histones and participates in their general removal from DNA. Also recognizes and binds a subset of butyrylated histones: able to bind histone H4 butyrylated at 'Lys-8' (H4K8ac), while it is not able to bind H4 butyrylated at 'Lys-5' (H4K5ac). Also acts as a component of the splicing machinery in pachytene spermatocytes and round spermatids and participates in 3'-UTR truncation of specific mRNAs in post-meiotic spermatids. Required for chromocenter organization, a structure comprised of peri-centromeric heterochromatin. This Rattus norvegicus (Rat) protein is Bromodomain testis-specific protein (Brdt).